A 190-amino-acid chain; its full sequence is Cytoglobin (190 aa).

Residues methionine 1 to glutamate 21 form a disordered region. Positions glutamate 18–lysine 167 constitute a Globin domain. Cysteine 38 and cysteine 83 are joined by a disulfide. Histidine 81 and histidine 113 together coordinate heme b.

The protein belongs to the globin family. In terms of assembly, monomeric. Homodimer; disulfide-linked in vitro. Also homooligomeric in vitro. Post-translationally, the formation of an intramolecular disulfide bond between cysteines Cys-38 and Cys-83 specifically enhances the nitrite reductase activity. Widely expressed (at protein level).

Its subcellular location is the cytoplasm. It localises to the nucleus. It carries out the reaction Fe(II)-heme b-[protein] + nitric oxide + O2 = Fe(III)-heme b-[protein] + nitrate. It catalyses the reaction Fe(III)-heme b-[protein] + nitric oxide + H2O = Fe(II)-heme b-[protein] + nitrite + 2 H(+). The catalysed reaction is 2 superoxide + 2 H(+) = H2O2 + O2. The enzyme catalyses H2O2 + AH2 = A + 2 H2O. With respect to regulation, the nitric oxide dioxygenase activity is activated by a reducing system composed of cytochrome b5, its upstream reductase CYB5R3 and NADH. In terms of biological role, probable multifunctional globin with a hexacoordinated heme iron required for the catalysis of various reactions depending on redox condition of the cell as well as oxygen availability. Has a nitric oxide dioxygenase (NOD) activity and is most probably involved in cell-mediated and oxygen-dependent nitric oxide consumption. By scavenging this second messenger may regulate several biological processes including endothelium-mediated vasodilation and vascular tone. Under normoxic conditions functions as a nitric oxide dioxygenase (NOD) but under hypoxic conditions the globin may switch its function to that of a nitrite (NO2) reductase (NiR), generating nitric oxide. Could also have peroxidase and superoxide dismutase activities, detoxifying reactive oxygen species and protecting cells against oxidative stress. Also binds dioxygen with low affinity and could function as an oxygen sensor but has probably no function as a respiratory oxygen carrier. The protein is Cytoglobin of Rattus norvegicus (Rat).